Here is a 168-residue protein sequence, read N- to C-terminus: MSEIPENSKVSIYSKNEKKARELIQKFSMKPMPGITRVTFRKKNNQIFAIDNPDVYKTQGGNYVVFGEPKVDDFTRRLARAQQQAASAAKDPQSIQADMAAAAAAPAAPAAPAAAPEEDEAGQVDESGLDGQDIELVMQQANVSRNKAVKALREHNSDIVNAIMSLSK.

The region spanning 14 to 78 (SKNEKKAREL…PKVDDFTRRL (65 aa)) is the NAC-A/B domain. The tract at residues 83 to 129 (QQAASAAKDPQSIQADMAAAAAAPAAPAAPAAAPEEDEAGQVDESGL) is disordered. A compositionally biased stretch (low complexity) spans 100-115 (AAAAAAPAAPAAPAAA). The 40-residue stretch at 129–168 (LDGQDIELVMQQANVSRNKAVKALREHNSDIVNAIMSLSK) folds into the UBA domain.

This sequence belongs to the NAC-alpha family. As to quaternary structure, part of the nascent polypeptide-associated complex (NAC), consisting of EGD2 and EGD1. NAC associates with ribosomes via EGD1.

It localises to the cytoplasm. It is found in the nucleus. Component of the nascent polypeptide-associated complex (NAC), a dynamic component of the ribosomal exit tunnel, protecting the emerging polypeptides from interaction with other cytoplasmic proteins to ensure appropriate nascent protein targeting. The NAC complex also promotes mitochondrial protein import by enhancing productive ribosome interactions with the outer mitochondrial membrane and blocks the inappropriate interaction of ribosomes translating non-secretory nascent polypeptides with translocation sites in the membrane of the endoplasmic reticulum. EGD2 may also be involved in transcription regulation. In Eremothecium gossypii (strain ATCC 10895 / CBS 109.51 / FGSC 9923 / NRRL Y-1056) (Yeast), this protein is Nascent polypeptide-associated complex subunit alpha (EGD2).